Consider the following 152-residue polypeptide: MPSVRLGVGLLAGLAAGGAVVLLSYCVYLDWRRHRDPAFRRRLQDKRRAGQPKAQAPARQLWDPVKKEELQEYFFREVQMGKLCLIRGERGMGFEHLTNALLVCEQPKELLMFFKKTLPPEVFQMLLDKIPLICQQLEETCRSTEHLKDDPD.

Over 1–6 the chain is Mitochondrial intermembrane; that stretch reads MPSVRL. Residues 7–27 form a helical membrane-spanning segment; the sequence is GVGLLAGLAAGGAVVLLSYCV. Over 28 to 152 the chain is Cytoplasmic; that stretch reads YLDWRRHRDP…STEHLKDDPD (125 aa).

The protein belongs to the Tom20 family.

It is found in the mitochondrion outer membrane. The protein is TOMM20-like protein 1 (Tomm20l) of Mus musculus (Mouse).